The primary structure comprises 147 residues: MKVLLIKDVKGLGKAGEVKDVKDGYGNNFLIGKGLAKSATDAVLKQYEAAKKRAQEEINYEINQNEKLKAELENIKIIIKTKLGANGALFGSITKDEIANALKEQKGYEVDKKALECDHIKATGIYDVALKLKHGISAKFKVEVAGE.

The protein belongs to the bacterial ribosomal protein bL9 family.

Functionally, binds to the 23S rRNA. The chain is Large ribosomal subunit protein bL9 from Campylobacter fetus subsp. fetus (strain 82-40).